Consider the following 1038-residue polypeptide: SEH-associated protein 4 (1038 aa).

The stretch at 50–90 (KDFGSITCLDYSESEIGMIGVGEKNGYLRIFNISGQNSSSP) is one WD 1 repeat. Phosphoserine occurs at positions 123 and 136. WD repeat units lie at residues 147-189 (KKQR…DSHE), 235-276 (QHPT…DQAS), and 544-587 (NTWR…SNQD).

The protein belongs to the WD repeat mio family. As to quaternary structure, component of the SEA complex composed of at least IML1/SEA1, RTC1/SEA2, MTC5/SEA3, NPR2, NPR3, SEA4, SEC13 and SEH1.

The protein resides in the cytoplasm. Its subcellular location is the vacuole membrane. In terms of biological role, component of the SEA complex which coats the vacuolar membrane and is involved in intracellular trafficking, autophagy, response to nitrogen starvation, and amino acid biogenesis. In Saccharomyces cerevisiae (strain ATCC 204508 / S288c) (Baker's yeast), this protein is SEH-associated protein 4 (SEA4).